We begin with the raw amino-acid sequence, 126 residues long: Aspartate 1-decarboxylase (126 aa).

The Schiff-base intermediate with substrate; via pyruvic acid role is filled by serine 25. Serine 25 is subject to Pyruvic acid (Ser). Threonine 57 provides a ligand contact to substrate. The active-site Proton donor is tyrosine 58. Position 73–75 (73–75 (GSA)) interacts with substrate.

This sequence belongs to the PanD family. In terms of assembly, heterooctamer of four alpha and four beta subunits. Requires pyruvate as cofactor. In terms of processing, is synthesized initially as an inactive proenzyme, which is activated by self-cleavage at a specific serine bond to produce a beta-subunit with a hydroxyl group at its C-terminus and an alpha-subunit with a pyruvoyl group at its N-terminus.

It is found in the cytoplasm. The catalysed reaction is L-aspartate + H(+) = beta-alanine + CO2. The protein operates within cofactor biosynthesis; (R)-pantothenate biosynthesis; beta-alanine from L-aspartate: step 1/1. In terms of biological role, catalyzes the pyruvoyl-dependent decarboxylation of aspartate to produce beta-alanine. This is Aspartate 1-decarboxylase from Acidovorax ebreus (strain TPSY) (Diaphorobacter sp. (strain TPSY)).